A 59-amino-acid chain; its full sequence is UPF0337 protein MM_2677 (59 aa).

Basic and acidic residues-rich tracts occupy residues 1 to 24 (MKEG…KESA) and 33 to 59 (MEAK…EFEK). The interval 1–59 (MKEGTKEEMEGKFSKAKGEIKESAGEMTGDIEMEAKGEAEKRKGEAQEKVGKIRKEFEK) is disordered.

This sequence belongs to the UPF0337 (CsbD) family.

In Methanosarcina mazei (strain ATCC BAA-159 / DSM 3647 / Goe1 / Go1 / JCM 11833 / OCM 88) (Methanosarcina frisia), this protein is UPF0337 protein MM_2677.